We begin with the raw amino-acid sequence, 689 residues long: Probable serine/threonine-protein kinase abkC (689 aa).

Positions 42-79 are disordered; sequence NNSGNENYKNFNYNYKNKNNYNNNNNNNNSNSSSNNNG. Residues 257–689 enclose the Protein kinase domain; the sequence is WFDEEPMASG…NNKNNNEKNK (433 aa). Residues 263–271 and Lys-285 contribute to the ATP site; that span reads MASGSVAQV. Catalysis depends on Asp-417, which acts as the Proton acceptor. The segment at 652-689 is disordered; sequence KQLNNDNNNNNNNNNNNKNNNDNNNKNNNNKNNNEKNK. Low complexity predominate over residues 655-683; sequence NNDNNNNNNNNNNNKNNNDNNNKNNNNKN.

The protein belongs to the protein kinase superfamily. ADCK protein kinase family.

The protein is Probable serine/threonine-protein kinase abkC (abkC) of Dictyostelium discoideum (Social amoeba).